We begin with the raw amino-acid sequence, 181 residues long: Translation initiation factor IF-3 (181 aa).

The protein belongs to the IF-3 family. As to quaternary structure, monomer.

The protein localises to the cytoplasm. IF-3 binds to the 30S ribosomal subunit and shifts the equilibrium between 70S ribosomes and their 50S and 30S subunits in favor of the free subunits, thus enhancing the availability of 30S subunits on which protein synthesis initiation begins. This chain is Translation initiation factor IF-3, found in Azotobacter vinelandii.